Here is a 273-residue protein sequence, read N- to C-terminus: Protein ALUMINUM SENSITIVE 3 (273 aa).

7 helical membrane passes run 14 to 34, 51 to 71, 76 to 96, 107 to 127, 136 to 156, 191 to 213, and 228 to 248; these read WLIV…VVLL, IYSV…LQFI, NSGW…YTAG, YVAG…LVLL, YMIP…GVTM, ALVI…SLPG, and AIQL…VSSI.

Belongs to the UPF0014 family. In terms of tissue distribution, expressed in roots, leaves, stems, and flowers.

It localises to the cell membrane. Required for aluminum (Al) resistance/tolerance, probably by translocating Al from sensitive tissues such as growing roots to tissues less sensisitive to the toxic effects of Al. The sequence is that of Protein ALUMINUM SENSITIVE 3 (ALS3) from Arabidopsis thaliana (Mouse-ear cress).